Reading from the N-terminus, the 718-residue chain is Protein Smaug homolog 1 (718 aa).

Residue Ser-168 is modified to Phosphoserine. Disordered regions lie at residues 278 to 323 (ARGP…EEGS), 416 to 474 (KAYS…LQPH), and 572 to 601 (NRGF…QYQI). An SAM domain is found at 323-391 (SGMKDVPAWL…ERQNLLKSLE (69 aa)). Phosphoserine is present on Ser-420. Phosphothreonine is present on Thr-424. Low complexity predominate over residues 453-466 (GAAATGATATPSAG). Arg-573 is subject to Omega-N-methylarginine. Ser-580 is subject to Phosphoserine.

Belongs to the SMAUG family.

The protein localises to the cytoplasm. It localises to the cell projection. Its subcellular location is the dendrite. The protein resides in the synapse. It is found in the synaptosome. In terms of biological role, acts as a translational repressor of SRE-containing messengers. This chain is Protein Smaug homolog 1 (SAMD4A), found in Homo sapiens (Human).